A 610-amino-acid chain; its full sequence is MADPNKGINSLELNEGHSEWYVVTEAECINSLDTMEELFEESTDGSIVSNLIDDSEELEEGNSLALYNEQLTEDCNRAILALKRKLTKTPLKSQDRTVADLSPRLEAVTISPQRQSKRRLFEDSGLGEDEATNSIEKKVVSNSLESNESGTLVVETDSIFRSTNRKATLLAKFKEYFGVAYGDLTRPFKSDRSCCENWVISVCAAAEEVIEASKTVMQQHCDFLQVISYGFYALYLVKFKTAKSRDTIMKLFSLTLNVQEQQLMCDPPKSRSTPTALYFYRRSFGNASFIYGPFPDWLAKLTMLDHESAASSEQFELAQMIQFAYDNNLTTESEIAYKYALLADSDANAAAFLKSNQQVKYVRDCYAMLRYYKRQEMKDMSISEWIWKCCDDCNQEGNWKLIAQFLRYQEVNFISFLCALKTLFKGIPKRNCLVFWGPPDTGKSYICSSLTRFMQGKVVSFMNRHSQFWLQPLQDCKLGFLDDATFQCWQYMDVNMRNALDGNHISLDLKHKAPLQIKLPPLLITTNVDVENEASLMYLKSRLVFFKFPNKLPLKENDEVLYEITDASWKCFFIKFASHLELTARGDEQHESGRSDRAFRCTAGTNTESI.

The short motif at 83-85 is the Nuclear localization signal element; sequence KRK. Residues Ser-93 and Ser-102 each carry the phosphoserine; by host modification. Positions 101–110 match the Nuclear export signal motif; the sequence is LSPRLEAVTI. A DNA-binding region region spans residues 148–312; it reads ESGTLVVETD…MLDHESAASS (165 aa). The SF3 helicase domain occupies 411-561; that stretch reads VNFISFLCAL…LPLKENDEVL (151 aa). 437–444 provides a ligand contact to ATP; sequence GPPDTGKS. Residue Lys-518 forms a Glycyl lysine isopeptide (Lys-Gly) (interchain with G-Cter in SUMO) linkage. The tract at residues 591 to 610 is disordered; that stretch reads ESGRSDRAFRCTAGTNTESI.

It belongs to the papillomaviridae E1 protein family. Can form hexamers. Interacts with E2 protein; this interaction increases E1 DNA binding specificity. Interacts with host DNA polymerase subunit POLA2. Interacts with host single stranded DNA-binding protein RPA1. Interacts with host TOP1; this interaction stimulates the enzymatic activity of TOP1. Phosphorylated. In terms of processing, sumoylated.

It is found in the host nucleus. The enzyme catalyses Couples ATP hydrolysis with the unwinding of duplex DNA by translocating in the 3'-5' direction.. It carries out the reaction ATP + H2O = ADP + phosphate + H(+). ATP-dependent DNA 3'-5' helicase required for initiation of viral DNA replication. It forms a complex with the viral E2 protein. The E1-E2 complex binds to the replication origin which contains binding sites for both proteins. During the initial step, a dimer of E1 interacts with a dimer of protein E2 leading to a complex that binds the viral origin of replication with high specificity. Then, a second dimer of E1 displaces the E2 dimer in an ATP-dependent manner to form the E1 tetramer. Following this, two E1 monomers are added to each half of the site, which results in the formation of two E1 trimers on the viral ori. Subsequently, two hexamers will be created. The double hexamer acts as a bi-directional helicase machinery and unwinds the viral DNA and then recruits the host DNA polymerase to start replication. The sequence is that of Replication protein E1 from Human papillomavirus type 60.